Here is a 628-residue protein sequence, read N- to C-terminus: Siderophore iron transporter 1 (628 aa).

14 consecutive transmembrane segments (helical) span residues 68-88, 107-127, 132-152, 164-184, 194-214, 225-245, 285-305, 317-337, 354-374, 394-414, 420-440, 448-468, 488-508, and 559-579; these read IYRVALFFSLFLIAYAYGLDG, LLSTVNCIKTVIAAVGQIFFA, IFGRFSIMIVSIIFYSMGTII, VGGCFYQLGLTGIILILEVIA, LLALFIPALPFIINTWISGNV, GIGMWAFILPLACIPLGICML, IIGMLLITVFFGCVLVPFTLA, IIVPEVIGWVVVLPLYMLWEI, GIFFALLIAFFINFNWYMQGD, ITSLYSFVSVIVGTILGFILI, KPFIIFGISCWIVSFGLLVHY, SGIIGSLCLLGFGAGSFTYVT, LYLATYNIGSAFGSSVSGAVW, and KILCIIGLVFCFPLLGCAFML.

Belongs to the major facilitator superfamily.

It localises to the endosome membrane. In terms of biological role, involved in the transport of siderophore ferrioxamine B and so has a role in iron homeostasis. The protein is Siderophore iron transporter 1 (SIT1) of Saccharomyces cerevisiae (strain ATCC 204508 / S288c) (Baker's yeast).